The chain runs to 484 residues: Phospholipase A1-Ialpha2, chloroplastic (484 aa).

The N-terminal 63 residues, 1–63 (MALIQNPNMK…LAPVILNSPV (63 aa)), are a transit peptide targeting the chloroplast. The short motif at 295–299 (GHSMG) is the GXSXG element. Ser-297 (acyl-ester intermediate) is an active-site residue. Residues Asp-360 and His-411 each act as charge relay system in the active site.

This sequence belongs to the AB hydrolase superfamily. Lipase family. In terms of tissue distribution, ubiquitous. Highest expression in flowers and leaves.

The protein localises to the plastid. It localises to the chloroplast. Its subcellular location is the plastoglobule. The enzyme catalyses a 1,2-diacyl-3-O-[alpha-D-galactosyl-(1-&gt;6)-beta-D-galactosyl]-sn-glycerol + H2O = acyl-3-O-[alpha-D-galactosyl-(1-&gt;6)-beta-D-galactosyl]-sn-glycerol + a fatty acid + H(+). The catalysed reaction is a 1,2-diacyl-3-O-(beta-D-galactosyl)-sn-glycerol + H2O = an acyl-3-O-(beta-D-galactosyl)-sn-glycerol + a fatty acid + H(+). Its function is as follows. Acylhydrolase that catalyzes the hydrolysis of phosphatidylcholine at the sn-1 position. Has a strong galactolipase activity toward monogalactosyldiacylglycerol (MGDG) and digalactosyldiacylglycerol (DGDG). Low triacylglycerol (TAG) lipase activity. Plays a role in plant growth and in leaf senescence. This chain is Phospholipase A1-Ialpha2, chloroplastic, found in Arabidopsis thaliana (Mouse-ear cress).